A 416-amino-acid polypeptide reads, in one-letter code: Phosphoglycerate kinase (416 aa).

The (2R)-3-phosphoglycerate site is built by Val23, Asp24, Phe25, Asn26, Gln39, Arg40, Ser63, His64, Gly66, Arg67, Leu122, Arg123, His170, and Arg171. Gly214 contacts ADP. Gly214 contributes to the CDP binding site. AMP contacts are provided by Ala215 and Lys216. Ala215 is an ATP binding site. Position 215 (Ala215) interacts with Mg(2+). A CDP-binding site is contributed by Asp219. Mg(2+) is bound at residue Asp219. Lys220 serves as a coordination point for AMP. Lys220 provides a ligand contact to ATP. Gly238 is an ADP binding site. CDP is bound at residue Gly238. 2 residues coordinate AMP: Gly239 and Gly312. Gly239 and Gly312 together coordinate ATP. The CDP site is built by Gly337, Ala339, and Phe342. Residue Phe342 coordinates ADP. Glu343 lines the AMP pocket. ATP contacts are provided by Glu343, Asp374, and Thr375. Asp374 is a Mg(2+) binding site.

This sequence belongs to the phosphoglycerate kinase family. In terms of assembly, monomer. It depends on Mg(2+) as a cofactor.

Its subcellular location is the cytoplasm. It is found in the mitochondrion. It catalyses the reaction (2R)-3-phosphoglycerate + ATP = (2R)-3-phospho-glyceroyl phosphate + ADP. It functions in the pathway carbohydrate degradation; glycolysis; pyruvate from D-glyceraldehyde 3-phosphate: step 2/5. Functionally, catalyzes one of the two ATP producing reactions in the glycolytic pathway via the reversible conversion of 1,3-diphosphoglycerate to 3-phosphoglycerate. Both L- and D- forms of purine and pyrimidine nucleotides can be used as substrates, but the activity is much lower on pyrimidines. Negatively regulates the biosynthesis of acetyl-CoA from pyruvate in the mitochondrion. The sequence is that of Phosphoglycerate kinase (pgk1) from Hypocrea jecorina (Trichoderma reesei).